The primary structure comprises 267 residues: UPF0162 protein HI_1558 (267 aa).

This sequence belongs to the UPF0162 family.

The protein is UPF0162 protein HI_1558 of Haemophilus influenzae (strain ATCC 51907 / DSM 11121 / KW20 / Rd).